Here is a 390-residue protein sequence, read N- to C-terminus: Phosphopentomutase (390 aa).

The Mn(2+) site is built by Asp11, Asp283, His288, Asp324, His325, and His336.

This sequence belongs to the phosphopentomutase family. The cofactor is Mn(2+).

It localises to the cytoplasm. The enzyme catalyses 2-deoxy-alpha-D-ribose 1-phosphate = 2-deoxy-D-ribose 5-phosphate. The catalysed reaction is alpha-D-ribose 1-phosphate = D-ribose 5-phosphate. Its pathway is carbohydrate degradation; 2-deoxy-D-ribose 1-phosphate degradation; D-glyceraldehyde 3-phosphate and acetaldehyde from 2-deoxy-alpha-D-ribose 1-phosphate: step 1/2. In terms of biological role, isomerase that catalyzes the conversion of deoxy-ribose 1-phosphate (dRib-1-P) and ribose 1-phosphate (Rib-1-P) to deoxy-ribose 5-phosphate (dRib-5-P) and ribose 5-phosphate (Rib-5-P), respectively. The chain is Phosphopentomutase from Clostridium novyi (strain NT).